The sequence spans 162 residues: NADH-quinone oxidoreductase subunit I (162 aa).

4Fe-4S ferredoxin-type domains follow at residues 52–82 and 93–122; these read LRRY…IEAG and VRYD…EGPN. Residues cysteine 62, cysteine 65, cysteine 68, cysteine 72, cysteine 102, cysteine 105, cysteine 108, and cysteine 112 each coordinate [4Fe-4S] cluster.

The protein belongs to the complex I 23 kDa subunit family. In terms of assembly, NDH-1 is composed of 14 different subunits. Subunits NuoA, H, J, K, L, M, N constitute the membrane sector of the complex. [4Fe-4S] cluster serves as cofactor.

The protein resides in the cell inner membrane. The catalysed reaction is a quinone + NADH + 5 H(+)(in) = a quinol + NAD(+) + 4 H(+)(out). In terms of biological role, NDH-1 shuttles electrons from NADH, via FMN and iron-sulfur (Fe-S) centers, to quinones in the respiratory chain. The immediate electron acceptor for the enzyme in this species is believed to be ubiquinone. Couples the redox reaction to proton translocation (for every two electrons transferred, four hydrogen ions are translocated across the cytoplasmic membrane), and thus conserves the redox energy in a proton gradient. The sequence is that of NADH-quinone oxidoreductase subunit I from Bradyrhizobium sp. (strain ORS 278).